Consider the following 327-residue polypeptide: Putative HTH-type transcriptional regulatory protein MM_0444 (327 aa).

Residues 132–190 (LKKARTTQSMSLGTLASMVGVSRRTISKYEEEGMDASIDVVLHLEDIFGVELAKPIDIL) form the HTH cro/C1-type domain. The segment at residues 143–162 (LGTLASMVGVSRRTISKYEE) is a DNA-binding region (H-T-H motif). Residues 195–214 (SRKPRKKAEPEKEEPKGKPG) are disordered. Positions 201–211 (KAEPEKEEPKG) are enriched in basic and acidic residues.

This is Putative HTH-type transcriptional regulatory protein MM_0444 from Methanosarcina mazei (strain ATCC BAA-159 / DSM 3647 / Goe1 / Go1 / JCM 11833 / OCM 88) (Methanosarcina frisia).